The following is a 276-amino-acid chain: uncharacterized protein (276 aa).

An N-terminal signal peptide occupies residues 1–25 (MNKKRLLPKASLGALFMLFGTALTA). C26 is lipidated: N-palmitoyl cysteine. C26 is lipidated: S-diacylglycerol cysteine.

Belongs to the MG439/MG440 family.

The protein localises to the cell membrane. This is an uncharacterized protein from Mycoplasma pneumoniae (strain ATCC 29342 / M129 / Subtype 1) (Mycoplasmoides pneumoniae).